Here is a 598-residue protein sequence, read N- to C-terminus: uncharacterized protein (598 aa).

This is an uncharacterized protein from Homo sapiens (Human).